We begin with the raw amino-acid sequence, 170 residues long: CDP-archaeol synthase (170 aa).

Helical transmembrane passes span 6–26 (LLWA…PVLV), 53–73 (GLIG…FITP), 83–103 (LLLA…GSFF), 114–134 (PAIG…AYPV), and 140–160 (GQII…NYFA).

Belongs to the CDP-archaeol synthase family. Requires Mg(2+) as cofactor.

It is found in the cell membrane. The catalysed reaction is 2,3-bis-O-(geranylgeranyl)-sn-glycerol 1-phosphate + CTP + H(+) = CDP-2,3-bis-O-(geranylgeranyl)-sn-glycerol + diphosphate. It participates in membrane lipid metabolism; glycerophospholipid metabolism. Its function is as follows. Catalyzes the formation of CDP-2,3-bis-(O-geranylgeranyl)-sn-glycerol (CDP-archaeol) from 2,3-bis-(O-geranylgeranyl)-sn-glycerol 1-phosphate (DGGGP) and CTP. This reaction is the third ether-bond-formation step in the biosynthesis of archaeal membrane lipids. The chain is CDP-archaeol synthase from Thermococcus onnurineus (strain NA1).